Here is a 187-residue protein sequence, read N- to C-terminus: Serine/arginine-rich splicing factor RSZ21 (187 aa).

The 72-residue stretch at 2–73 folds into the RRM domain; sequence TRVYVGNLDP…WRVELSHKDK (72 aa). 2 disordered regions span residues 68 to 89 and 105 to 187; these read LSHK…IEDS and RRGR…ANGV. Residues 89–106 form a CCHC-type zinc finger; it reads SKCYECGELGHFARECRR. Over residues 107 to 122 the composition is skewed to basic residues; sequence GRGSVRRRSPSPRRRR. Phosphoserine occurs at positions 123, 132, 134, 140, 146, and 159. Positions 136-155 are enriched in basic residues; that stretch reads RGRRSPPRRRSVTPPRRGRS. Positions 165–177 are enriched in basic and acidic residues; that stretch reads SRRDSPRRRDSPY. Positions 178-187 are enriched in low complexity; it reads GRRSPYANGV. Phosphoserine is present on serine 181.

This sequence belongs to the splicing factor SR family. RSZ subfamily. Component of the spliceosome. Interacts with SNRNP35, AFC2, CYP59, RS2Z33 and RNU1. Interacts with MOS14. In terms of processing, extensively phosphorylated on serine residues in the RS domain. Phosphorylated by AFC2. As to expression, expressed in roots, leaves, flowers and siliques.

The protein resides in the nucleus speckle. Its function is as follows. Probably involved in intron recognition and spliceosome assembly. This is Serine/arginine-rich splicing factor RSZ21 (RSZ21) from Arabidopsis thaliana (Mouse-ear cress).